The primary structure comprises 249 residues: Enolase-phosphatase E1 (249 aa).

Aspartate 9 and glutamate 11 together coordinate Mg(2+). Substrate-binding positions include 137–138 and lysine 177; that span reads SS. Aspartate 204 is a Mg(2+) binding site.

It belongs to the HAD-like hydrolase superfamily. MasA/MtnC family. As to quaternary structure, monomer. Mg(2+) is required as a cofactor.

It is found in the cytoplasm. The protein localises to the nucleus. It carries out the reaction 5-methylsulfanyl-2,3-dioxopentyl phosphate + H2O = 1,2-dihydroxy-5-(methylsulfanyl)pent-1-en-3-one + phosphate. It functions in the pathway amino-acid biosynthesis; L-methionine biosynthesis via salvage pathway; L-methionine from S-methyl-5-thio-alpha-D-ribose 1-phosphate: step 3/6. The protein operates within amino-acid biosynthesis; L-methionine biosynthesis via salvage pathway; L-methionine from S-methyl-5-thio-alpha-D-ribose 1-phosphate: step 4/6. Functionally, bifunctional enzyme that catalyzes the enolization of 2,3-diketo-5-methylthiopentyl-1-phosphate (DK-MTP-1-P) into the intermediate 2-hydroxy-3-keto-5-methylthiopentenyl-1-phosphate (HK-MTPenyl-1-P), which is then dephosphorylated to form the acireductone 1,2-dihydroxy-3-keto-5-methylthiopentene (DHK-MTPene). This chain is Enolase-phosphatase E1, found in Lodderomyces elongisporus (strain ATCC 11503 / CBS 2605 / JCM 1781 / NBRC 1676 / NRRL YB-4239) (Yeast).